A 605-amino-acid chain; its full sequence is Methyl-CpG-binding domain protein 1 (605 aa).

The MBD domain maps to 1–69 (MAEDWLDCPA…TLFDFKQGIL (69 aa)). The interval 80 to 123 (AVASKKRKKPSRPAKTRKRQVGPQSGEVRKEAPRDETKADTDTA) is disordered. Basic residues predominate over residues 83–99 (SKKRKKPSRPAKTRKRQ). Positions 84 to 88 (KKRKK) match the Nuclear localization signal motif. Basic and acidic residues predominate over residues 106–120 (EVRKEAPRDETKADT). Residue Lys117 forms a Glycyl lysine isopeptide (Lys-Gly) (interchain with G-Cter in SUMO2) linkage. 2 consecutive CXXC-type zinc fingers follow at residues 169-216 (RMFK…RRCL) and 217-263 (RIVE…RRCL). Zn(2+)-binding residues include Cys176, Cys179, Cys182, Cys188, Cys191, Cys194, Cys210, Cys215, Cys225, Cys228, Cys231, Cys237, Cys240, Cys243, Cys257, and Cys262. The disordered stretch occupies residues 269–308 (RRKGGCDSKMAARRRPGAQPLPPPPPSQSPEPTEPHPRAL). Residue Lys277 forms a Glycyl lysine isopeptide (Lys-Gly) (interchain with G-Cter in SUMO2) linkage. Positions 287 to 297 (QPLPPPPPSQS) are enriched in pro residues. Ser297 bears the Phosphoserine mark. Residues 330–378 (TNRRQNRKCGACAACLRRMDCGRCDFCCDKPKFGGSNQKRQKCRWRQCL) form a CXXC-type 3 zinc finger. 8 residues coordinate Zn(2+): Cys338, Cys341, Cys344, Cys350, Cys353, Cys356, Cys372, and Cys377. Residues Ser391 and Ser399 each carry the phosphoserine modification. The interval 391–451 (SESEDGAGSP…EAGGGFVLPP (61 aa)) is disordered. Residues 403-417 (YRRRKRPSSARRHHL) are compositionally biased toward basic residues. Lys422 is covalently cross-linked (Glycyl lysine isopeptide (Lys-Gly) (interchain with G-Cter in SUMO2)). Residues 426 to 439 (ATRTAQPDHTQAPT) are compositionally biased toward polar residues. A Glycyl lysine isopeptide (Lys-Gly) (interchain with G-Cter in SUMO2) cross-link involves residue Lys440. Residues Lys499 and Lys538 each participate in a glycyl lysine isopeptide (Lys-Gly) (interchain with G-Cter in SUMO2); alternate cross-link. The segment at 520 to 573 (VLVPGCPSKAVDPGLPSVKQEPPDPEEDKEENKDDSASKLAPEEEAGGAGTPVI) is disordered. A transcriptional repression domain (TRD) region spans residues 529–592 (AVDPGLPSVK…RFRDTAVWLP (64 aa)). A Glycyl lysine isopeptide (Lys-Gly) (interchain with G-Cter in SUMO2) cross-link involves residue Lys558.

As to quaternary structure, interacts with OASL, ATF7IP, ATF7IP2 and BAHD1. Binds CHAF1A and the SUV39H1-CBX5 complex via the MBD domain. Binds MGP via the TRD domain. May be part of the MeCP1 complex. Sumoylated, sumoylation may increase interaction with ATF7IP. Widely expressed.

It is found in the nucleus. Its subcellular location is the nucleus matrix. It localises to the nucleus speckle. The protein resides in the chromosome. Transcriptional repressor that binds CpG islands in promoters where the DNA is methylated at position 5 of cytosine within CpG dinucleotides. Binding is abolished by the presence of 7-mG that is produced by DNA damage by methylmethanesulfonate (MMS). Acts as transcriptional repressor and plays a role in gene silencing by recruiting ATF7IP, which in turn recruits factors such as the histone methyltransferase SETDB1. Probably forms a complex with SETDB1 and ATF7IP that represses transcription and couples DNA methylation and histone 'Lys-9' trimethylation. Isoform 1 and isoform 2 can also repress transcription from unmethylated promoters. This Homo sapiens (Human) protein is Methyl-CpG-binding domain protein 1.